We begin with the raw amino-acid sequence, 56 residues long: Small ribosomal subunit protein bS21 (56 aa).

This sequence belongs to the bacterial ribosomal protein bS21 family.

The polypeptide is Small ribosomal subunit protein bS21 (rpsU) (Geobacillus stearothermophilus (Bacillus stearothermophilus)).